Here is an 859-residue protein sequence, read N- to C-terminus: Bifunctional uridylyltransferase/uridylyl-removing enzyme (859 aa).

Residues 1–325 (MSAHAAPSPE…PATSGITRVL (325 aa)) are uridylyltransferase. Residues 326-682 (SHDRFVEKQG…ARPSPIGDAL (357 aa)) are uridylyl-removing. The 123-residue stretch at 444–566 (VDQHILMVLR…VGNERYLTAL (123 aa)) folds into the HD domain. 2 consecutive ACT domains span residues 683 to 762 (QVLV…PEPS) and 791 to 859 (ILSV…AIAV).

Belongs to the GlnD family. Mg(2+) is required as a cofactor.

The enzyme catalyses [protein-PII]-L-tyrosine + UTP = [protein-PII]-uridylyl-L-tyrosine + diphosphate. It catalyses the reaction [protein-PII]-uridylyl-L-tyrosine + H2O = [protein-PII]-L-tyrosine + UMP + H(+). Uridylyltransferase (UTase) activity is inhibited by glutamine, while glutamine activates uridylyl-removing (UR) activity. Its function is as follows. Modifies, by uridylylation and deuridylylation, the PII regulatory proteins (GlnB and homologs), in response to the nitrogen status of the cell that GlnD senses through the glutamine level. Under low glutamine levels, catalyzes the conversion of the PII proteins and UTP to PII-UMP and PPi, while under higher glutamine levels, GlnD hydrolyzes PII-UMP to PII and UMP (deuridylylation). Thus, controls uridylylation state and activity of the PII proteins, and plays an important role in the regulation of nitrogen fixation and metabolism. In Burkholderia vietnamiensis (strain G4 / LMG 22486) (Burkholderia cepacia (strain R1808)), this protein is Bifunctional uridylyltransferase/uridylyl-removing enzyme.